A 1206-amino-acid polypeptide reads, in one-letter code: DNA-directed RNA polymerase subunit beta' (1206 aa).

Zn(2+) contacts are provided by Cys60, Cys62, Cys75, and Cys78. Residues Asp449, Asp451, and Asp453 each contribute to the Mg(2+) site. Positions 822, 896, 903, and 906 each coordinate Zn(2+).

Belongs to the RNA polymerase beta' chain family. The RNAP catalytic core consists of 2 alpha, 1 beta, 1 beta' and 1 omega subunit. When a sigma factor is associated with the core the holoenzyme is formed, which can initiate transcription. It depends on Mg(2+) as a cofactor. Zn(2+) serves as cofactor.

It carries out the reaction RNA(n) + a ribonucleoside 5'-triphosphate = RNA(n+1) + diphosphate. In terms of biological role, DNA-dependent RNA polymerase catalyzes the transcription of DNA into RNA using the four ribonucleoside triphosphates as substrates. In Staphylococcus haemolyticus (strain JCSC1435), this protein is DNA-directed RNA polymerase subunit beta'.